The following is a 486-amino-acid chain: Ribulose bisphosphate carboxylase large chain (486 aa).

Positions 125 and 175 each coordinate substrate. Residue lysine 177 is the Proton acceptor of the active site. Substrate is bound at residue lysine 179. Positions 203, 205, and 206 each coordinate Mg(2+). Lysine 203 is modified (N6-carboxylysine). The active-site Proton acceptor is the histidine 295. The substrate site is built by arginine 296, histidine 328, and serine 380.

This sequence belongs to the RuBisCO large chain family. Type I subfamily. As to quaternary structure, heterohexadecamer of 8 large chains and 8 small chains. Mg(2+) serves as cofactor.

The catalysed reaction is 2 (2R)-3-phosphoglycerate + 2 H(+) = D-ribulose 1,5-bisphosphate + CO2 + H2O. It catalyses the reaction D-ribulose 1,5-bisphosphate + O2 = 2-phosphoglycolate + (2R)-3-phosphoglycerate + 2 H(+). In terms of biological role, ruBisCO catalyzes two reactions: the carboxylation of D-ribulose 1,5-bisphosphate, the primary event in carbon dioxide fixation, as well as the oxidative fragmentation of the pentose substrate. Both reactions occur simultaneously and in competition at the same active site. This Aurantimonas manganoxydans (strain ATCC BAA-1229 / DSM 21871 / SI85-9A1) protein is Ribulose bisphosphate carboxylase large chain.